Reading from the N-terminus, the 275-residue chain is MSERKKRGSSDADSRRGVAIISPPKRRSQRKSASDSPIPAPIMKRSITVKKIMPRKTLAAIANTGSQFTPKVSNVTAAPRRSSRISPKIQKENAFSEQSQMDPKDVTSQSSAPEIDVLSPIPVNIQLSPKLDNRDMIMSQKVRRSYSRLEMSLNSSAFLYSPTRKTDSSDTSTPNAVLKSSRISLFGFDKLLNSEMPEGELKKSSAVTREKTANERNLQTVLPEEPDHNIPGVVLAKQKRRKRKVPVLEKSDVDEWAAIMNAEFDEAEKFDLTVE.

A compositionally biased stretch (basic and acidic residues) spans 1–16 (MSERKKRGSSDADSRR). 2 disordered regions span residues 1–42 (MSER…PAPI) and 63–117 (NTGS…EIDV). Polar residues-rich tracts occupy residues 63 to 76 (NTGSQFTPKVSNVT) and 93 to 112 (NAFSEQSQMDPKDVTSQSSA). A KEN box motif is present at residues 91 to 93 (KEN). Positions 186–188 (FGF) match the FGF motif motif. Residues 253–275 (VDEWAAIMNAEFDEAEKFDLTVE) form a C-terminal Sororin domain region.

Belongs to the sororin family. Interacts with the APC/C complex. Interacts with the chromatin-bound cohesin complex; the interaction is indirect, occurs after DNA replication and requires acetylation of the cohesin component smc3. Interacts (via the FGF motif) with pds5a and pds5b; the interaction is direct and prevents the interaction of pds5a with wapl. In terms of processing, ubiquitinated by the APC/C complex in G1, leading to its degradation.

The protein localises to the nucleus. The protein resides in the chromosome. It is found in the cytoplasm. Regulator of sister chromatid cohesion in mitosis stabilizing cohesin complex association with chromatin. May antagonize the action of wapl which stimulates cohesin dissociation from chromatin. Cohesion ensures that chromosome partitioning is accurate in both meiotic and mitotic cells and plays an important role in DNA repair. Required for efficient DNA double-stranded break repair. This Xenopus laevis (African clawed frog) protein is Sororin-B (cdca5-b).